The sequence spans 341 residues: Uroporphyrinogen decarboxylase (341 aa).

Residues 23–27, aspartate 73, tyrosine 148, serine 203, and histidine 318 contribute to the substrate site; that span reads RQAGR.

It belongs to the uroporphyrinogen decarboxylase family. Homodimer.

Its subcellular location is the cytoplasm. The catalysed reaction is uroporphyrinogen III + 4 H(+) = coproporphyrinogen III + 4 CO2. It functions in the pathway porphyrin-containing compound metabolism; protoporphyrin-IX biosynthesis; coproporphyrinogen-III from 5-aminolevulinate: step 4/4. Functionally, catalyzes the decarboxylation of four acetate groups of uroporphyrinogen-III to yield coproporphyrinogen-III. This Brucella anthropi (strain ATCC 49188 / DSM 6882 / CCUG 24695 / JCM 21032 / LMG 3331 / NBRC 15819 / NCTC 12168 / Alc 37) (Ochrobactrum anthropi) protein is Uroporphyrinogen decarboxylase.